Reading from the N-terminus, the 126-residue chain is Nucleoside diphosphate kinase B (126 aa).

ATP contacts are provided by Lys-6, Phe-37, Thr-68, Arg-79, and Asn-89. His-92 (pros-phosphohistidine intermediate) is an active-site residue.

Belongs to the NDK family. Requires Mg(2+) as cofactor.

It is found in the cytoplasm. The protein localises to the nucleus. It localises to the cell projection. The protein resides in the lamellipodium. Its subcellular location is the ruffle. The enzyme catalyses a 2'-deoxyribonucleoside 5'-diphosphate + ATP = a 2'-deoxyribonucleoside 5'-triphosphate + ADP. The catalysed reaction is a ribonucleoside 5'-diphosphate + ATP = a ribonucleoside 5'-triphosphate + ADP. Its function is as follows. Major role in the synthesis of nucleoside triphosphates other than ATP. The protein is Nucleoside diphosphate kinase B (nme2) of Macruronus magellanicus (Patagonian grenadier).